A 322-amino-acid chain; its full sequence is NADH-quinone oxidoreductase subunit H (322 aa).

A run of 8 helical transmembrane segments spans residues 12–32 (IGKALIVLVGIVGAGAFMSFI), 79–99 (IFILAPIIAFTAFILAFAVVP), 111–131 (VGLLYILAIAGLAVYAVLFAG), 151–171 (LSYEVFLGLSLMGIVIQTGSF), 183–203 (LWNVVPQFLGFITFLFAGVAV), 234–254 (FFVGEYIGIVLISSLIVTLFF), 262–282 (LPPFFWFALKTACFMVFFILL), and 301–321 (VCLPLTLINMLITAAVVLMNV).

It belongs to the complex I subunit 1 family. NDH-1 is composed of 13 different subunits. Subunits NuoA, H, J, K, L, M, N constitute the membrane sector of the complex.

The protein resides in the cell inner membrane. It carries out the reaction a quinone + NADH + 5 H(+)(in) = a quinol + NAD(+) + 4 H(+)(out). In terms of biological role, NDH-1 shuttles electrons from NADH, via FMN and iron-sulfur (Fe-S) centers, to quinones in the respiratory chain. The immediate electron acceptor for the enzyme in this species is believed to be ubiquinone. Couples the redox reaction to proton translocation (for every two electrons transferred, four hydrogen ions are translocated across the cytoplasmic membrane), and thus conserves the redox energy in a proton gradient. This subunit may bind ubiquinone. The chain is NADH-quinone oxidoreductase subunit H from Shewanella oneidensis (strain ATCC 700550 / JCM 31522 / CIP 106686 / LMG 19005 / NCIMB 14063 / MR-1).